Reading from the N-terminus, the 151-residue chain is Peptide methionine sulfoxide reductase MsrB (151 aa).

Residues 5-127 (KEERLKQLTR…NSAALRFVPK (123 aa)) enclose the MsrB domain. The active-site Nucleophile is the cysteine 116.

The protein belongs to the MsrB Met sulfoxide reductase family.

The catalysed reaction is L-methionyl-[protein] + [thioredoxin]-disulfide + H2O = L-methionyl-(R)-S-oxide-[protein] + [thioredoxin]-dithiol. This Bacillus licheniformis (strain ATCC 14580 / DSM 13 / JCM 2505 / CCUG 7422 / NBRC 12200 / NCIMB 9375 / NCTC 10341 / NRRL NRS-1264 / Gibson 46) protein is Peptide methionine sulfoxide reductase MsrB.